The following is a 419-amino-acid chain: Histidine--tRNA ligase (419 aa).

The protein belongs to the class-II aminoacyl-tRNA synthetase family. In terms of assembly, homodimer.

It localises to the cytoplasm. It catalyses the reaction tRNA(His) + L-histidine + ATP = L-histidyl-tRNA(His) + AMP + diphosphate + H(+). The chain is Histidine--tRNA ligase from Synechococcus sp. (strain JA-3-3Ab) (Cyanobacteria bacterium Yellowstone A-Prime).